A 1121-amino-acid polypeptide reads, in one-letter code: Cilia- and flagella-associated protein 70 (1121 aa).

Residues 410–428 (NLKEDKPVKEKDIDGRPRP) show a composition bias toward basic and acidic residues. A disordered region spans residues 410 to 457 (NLKEDKPVKEKDIDGRPRPGDVQAPSIKSQSSDTPLEGEPPLSHNPEG). 3 TPR repeats span residues 635 to 668 (SEQLQLFAFEAEVNENFEMAAAYYKERLVREPQN), 669 to 702 (LDHWLDYGAFCLLTEDNIKAQECFQKALSLNQSH), and 704 to 736 (HSLLLCGVLAVLLENYEQAEIFFEDATCLEPTN). Disordered stretches follow at residues 778-802 (KQKSTGVEDTEERGKRESSLGPWGI) and 836-858 (QSDSQEPILTTQTWDPSISQKPS). TPR repeat units lie at residues 929–962 (CEYYLVLAQTHILKKNFAKAEEYLQQAAQMDYLN), 963–996 (PNVWGLKGHLYFLSGNHSEAKACYERTISFVVDA), 1000–1033 (HFIFLRLGLIYLEEKEYEKAKKTYMQACKRSPSC), 1035–1066 (TWLGLGIACYRLEELTEAEDALSEANALNNYN), and 1068–1100 (EVWAYLALVCLKVGRQLEAEQAYKYMIKLKLKD).

The protein belongs to the CFAP70 family. As to expression, expressed in testis.

It localises to the cell projection. It is found in the cilium. The protein resides in the flagellum. Its subcellular location is the cytoplasm. The protein localises to the cytoskeleton. It localises to the flagellum basal body. It is found in the cilium axoneme. Its function is as follows. Axoneme-binding protein that plays a role in the regulation of ciliary motility and cilium length. This chain is Cilia- and flagella-associated protein 70, found in Homo sapiens (Human).